A 125-amino-acid chain; its full sequence is Large ribosomal subunit protein bL12 (125 aa).

Belongs to the bacterial ribosomal protein bL12 family. In terms of assembly, homodimer. Part of the ribosomal stalk of the 50S ribosomal subunit. Forms a multimeric L10(L12)X complex, where L10 forms an elongated spine to which 2 to 4 L12 dimers bind in a sequential fashion. Binds GTP-bound translation factors.

Its function is as follows. Forms part of the ribosomal stalk which helps the ribosome interact with GTP-bound translation factors. Is thus essential for accurate translation. The sequence is that of Large ribosomal subunit protein bL12 from Francisella tularensis subsp. holarctica (strain FTNF002-00 / FTA).